A 134-amino-acid polypeptide reads, in one-letter code: MGRSRRTGAHRAHSLARQMKAKKRRPDLDEIHRELRPQGLPRPKPEPDAEPDPDLPGGGLHRCLACARYFIDSANLKTHFRSKDHKKRLKQLSVEPYSQEEAERAAGMGSYVQPQRLGVPTEVSTDIPEMDTST.

Positions 1–25 (MGRSRRTGAHRAHSLARQMKAKKRR) are enriched in basic residues. Disordered stretches follow at residues 1 to 58 (MGRS…LPGG) and 85 to 134 (HKKR…DTST). Residues 26-36 (PDLDEIHRELR) are compositionally biased toward basic and acidic residues. The C2H2-type zinc-finger motif lies at 61–85 (HRCLACARYFIDSANLKTHFRSKDH).

The protein belongs to the ZNF593/BUD20 C2H2-type zinc-finger protein family. Associates with pre-60S ribosomal particles.

It localises to the nucleus. The protein resides in the nucleolus. It is found in the cytoplasm. In terms of biological role, involved in pre-60S ribosomal particles maturation by promoting the nuclear export of the 60S ribosome. Negatively modulates the DNA binding activity of Oct-2 and therefore its transcriptional regulatory activity. The sequence is that of Zinc finger protein 593 (Znf593) from Mus musculus (Mouse).